We begin with the raw amino-acid sequence, 4835 residues long: Midasin (4835 aa).

AAA-ATPase protomer regions lie at residues 12–161, 324–689, 797–1049, 1096–1375, 1489–1738, and 1821–2110; these read EVLR…PLVL, RSLD…HRFR, MTTI…AEII, KFQD…DYIT, APTT…FGYR, and ALEA…SIDI. ATP-binding positions include 31–38, 356–363, 814–821, 1127–1134, 1513–1520, and 1839–1846; these read GPSASGRT, GPTGIGKT, GTTSSGKT, GVSGAGKT, GDPGVGKS, and GSPESGKS. The interval 2197–4058 is linker; that stretch reads SVFIASTLNA…DGTGDQNVSK (1862 aa). Disordered regions lie at residues 4033-4056 and 4108-4523; these read DQKETDNDNQSGLGLGDGTGDQNV and IEEE…LLNP. 5 stretches are compositionally biased toward acidic residues: residues 4109–4133, 4141–4150, 4226–4241, 4282–4291, and 4315–4330; these read EEEDSNGSDEEEVLEKEMGDEQGEA, EDDDSAEEYS, ADGEDETVNEELEEEQ, VDIDDNEASD, and NDEEEMQKDTEYDQEN. Positions 4331–4346 are enriched in polar residues; sequence ITDSNPDANEVGTNDQ. Composition is skewed to basic and acidic residues over residues 4347-4360, 4394-4415, and 4429-4438; these read KQTHEDNDQFRQEN, EFQRIWKERLNIHDRESEKDEA, and VEFDDSKSGR. The span at 4468 to 4477 shows a compositional bias: polar residues; that stretch reads HNSSCETSQS. Residues 4478 to 4488 are compositionally biased toward basic and acidic residues; sequence SHDRPPAEHLN. One can recognise a VWFA domain in the interval 4629 to 4818; sequence QVLLAVDDSS…RHIEDLPETL (190 aa).

The protein belongs to the midasin family. Associates with pre-60S ribosomes in the nucleoplasm.

It localises to the nucleus. Its subcellular location is the nucleolus. It is found in the nucleoplasm. Its function is as follows. Nuclear chaperone required for maturation and nuclear export of pre-60S ribosome subunits. Functions at successive maturation steps to remove ribosomal factors at critical transition points, first driving the exit of early pre-60S particles from the nucleolus and then driving late pre-60S particles from the nucleus. The polypeptide is Midasin (MDN1) (Giardia intestinalis (Giardia lamblia)).